The sequence spans 259 residues: Small ribosomal subunit protein uS2 (259 aa).

It belongs to the universal ribosomal protein uS2 family.

This Streptococcus pneumoniae serotype 2 (strain D39 / NCTC 7466) protein is Small ribosomal subunit protein uS2.